The primary structure comprises 324 residues: MYLPSLVLGLLGFGLTASTSPIEERSNRSKAPAGCLTVGSSGTYATIGAALSALGSSTSDACIFIGAGTYQEQITIDYKGKLTMYGETTDTSSYKQNLVTITHSISSPEAGSLDKSATVNVRSDGFKMYNINVINGYGKGAQAVTLVANADKLGFYGCSFVGYQDTLYAKAGRQYYSNCYIEGAVDYIFGDASAWFGECDLVSVGPGYITAMSRTTADETTWYAIDHCNIYGKPGVDLTSAVYLGRPWRVLARVIFQNSQLSNIINPKGWSPMATGATPLYYEYNNKGAGADTSKREYESPISGAVSIATVLGGGWNSWVDTTY.

Residues 1–19 form the signal peptide; the sequence is MYLPSLVLGLLGFGLTAST. Asparagine 27 carries N-linked (GlcNAc...) asparagine glycosylation. Position 142 (glutamine 142) interacts with substrate. The Proton donor role is filled by aspartate 165. Residue aspartate 186 is the Nucleophile of the active site. Residues arginine 246 and tryptophan 248 each contribute to the substrate site.

The protein belongs to the pectinesterase family.

It localises to the secreted. It carries out the reaction [(1-&gt;4)-alpha-D-galacturonosyl methyl ester](n) + n H2O = [(1-&gt;4)-alpha-D-galacturonosyl](n) + n methanol + n H(+). Its pathway is glycan metabolism; pectin degradation; 2-dehydro-3-deoxy-D-gluconate from pectin: step 1/5. In terms of biological role, involved in maceration and soft-rotting of plant tissue. The sequence is that of Probable pectinesterase A (pmeA) from Aspergillus fumigatus (strain CBS 144.89 / FGSC A1163 / CEA10) (Neosartorya fumigata).